Consider the following 692-residue polypeptide: MNKHLHFLSLLWLSMLMAFMTACSDDKNITDPAPEPEPPVEGQWTALTASPDTWDETKRADISYQLLLYSFADSDGDGYGDLNGVTQKLDYLNQLGVKALWLSPIHPCMSYHGYDVTDYTKVNPQLGTESDFDRLVTEAHNRGIKIYLDYVMNHTGTAHPWFTEASSSSESPYRNYYSFSEDPKTDIAAGKIAMITQEGAAGYNAAEWFQVSDETAAVKGLLKFTLDWSNAPSPILVVSTGTKADEDNPDTGTDNAKYLYYGEDICKKFYDKGNNIYELTVDFESTWGLLIRTSNASFWPSGTKYGASSSSEKLALNKDFKLTNAGNPANIMFDSQQITYFHSHFCTDWFADLNYGPVDQAGESPAYQAIADAAKGWIARGVDGLRLDAVKHIYHSETSEENPRFLKMFYEDMNAYYKQKGHTDDFYMIGEVLSEYDKVAPYYKGLPALFEFSFWYRLEWGINNSTGCYFAKDILSYQQKYANYRSDYIEATKLSNHDEDRTSSKLGKSADKCKLAAAVLLTSAGHPYIYYGEELGLYGTKDNGDEYVRSPMLWGDSYTTNYTDKTDATVSKNVKTVADQQADTHSLLNIYFSLTRLRNTYPALAEGNMTKHSVYNESQEKDYKPIAAWYMTKDNEKLLVIHNFGGTAMQLPLTDKIEKVLFVNGETQQNTDSDSYTLKLGGYASVVFKLGN.

A signal peptide spans 1–22; that stretch reads MNKHLHFLSLLWLSMLMAFMTA. The N-palmitoyl cysteine moiety is linked to residue cysteine 23. Cysteine 23 is lipidated: S-diacylglycerol cysteine. Residues aspartate 73, aspartate 75, aspartate 77, tyrosine 79, and aspartate 81 each contribute to the Mg(2+) site. Ca(2+) is bound at residue asparagine 153. Starch binding regions lie at residues histidine 154, 260 to 263, and 330 to 333; these read YYGE and NIMF. Aspartate 352 is a binding site for Ca(2+). The starch binding stretch occupies residues 386–392; that stretch reads RLDAVKH. The active-site Nucleophile is the aspartate 388. Residue histidine 392 coordinates Ca(2+). The active-site Proton donor is glutamate 431. Regions of interest (starch binding) are located at aspartate 437 and arginine 457.

It belongs to the glycosyl hydrolase 13 family. Monomer. Ca(2+) is required as a cofactor.

It is found in the cell outer membrane. It carries out the reaction Endohydrolysis of (1-&gt;4)-alpha-D-glucosidic linkages in polysaccharides containing three or more (1-&gt;4)-alpha-linked D-glucose units.. Its pathway is glycan degradation; starch degradation. Alpha-amylase that cleaves starch into oligosaccharides before internalization for degradation, the first step in starch degradation. The protein is Alpha-amylase SusG (susG) of Bacteroides thetaiotaomicron (strain ATCC 29148 / DSM 2079 / JCM 5827 / CCUG 10774 / NCTC 10582 / VPI-5482 / E50).